The chain runs to 650 residues: Chaperone protein DnaK (650 aa).

Thr200 carries the post-translational modification Phosphothreonine; by autocatalysis. Over residues 612-636 (QQAGAAGAAGAAEGAAHAGGAQQAA) the composition is skewed to low complexity. The tract at residues 612–650 (QQAGAAGAAGAAEGAAHAGGAQQAADDVVDAEFKEVKKD) is disordered.

The protein belongs to the heat shock protein 70 family.

Its function is as follows. Acts as a chaperone. This chain is Chaperone protein DnaK, found in Burkholderia ambifaria (strain ATCC BAA-244 / DSM 16087 / CCUG 44356 / LMG 19182 / AMMD) (Burkholderia cepacia (strain AMMD)).